A 240-amino-acid polypeptide reads, in one-letter code: uncharacterized protein (240 aa).

This is an uncharacterized protein from Bacillus subtilis (strain 168).